The chain runs to 417 residues: UDP-N-acetylglucosamine 1-carboxyvinyltransferase (417 aa).

Phosphoenolpyruvate is bound at residue 22 to 23; that stretch reads KN. R93 provides a ligand contact to UDP-N-acetyl-alpha-D-glucosamine. The active-site Proton donor is C117. 2-(S-cysteinyl)pyruvic acid O-phosphothioketal is present on C117. Residues 122–126, D305, and I327 contribute to the UDP-N-acetyl-alpha-D-glucosamine site; that span reads RPVDQ.

Belongs to the EPSP synthase family. MurA subfamily.

It localises to the cytoplasm. It carries out the reaction phosphoenolpyruvate + UDP-N-acetyl-alpha-D-glucosamine = UDP-N-acetyl-3-O-(1-carboxyvinyl)-alpha-D-glucosamine + phosphate. It functions in the pathway cell wall biogenesis; peptidoglycan biosynthesis. In terms of biological role, cell wall formation. Adds enolpyruvyl to UDP-N-acetylglucosamine. The sequence is that of UDP-N-acetylglucosamine 1-carboxyvinyltransferase from Nitrosomonas europaea (strain ATCC 19718 / CIP 103999 / KCTC 2705 / NBRC 14298).